We begin with the raw amino-acid sequence, 486 residues long: Ribulose bisphosphate carboxylase large chain 3 (486 aa).

Residues Asn125 and Thr175 each contribute to the substrate site. Lys177 acts as the Proton acceptor in catalysis. Lys179 is a binding site for substrate. Mg(2+) contacts are provided by Lys203, Asp205, and Glu206. Position 203 is an N6-carboxylysine (Lys203). The Proton acceptor role is filled by His295. Substrate-binding residues include Arg296, His328, and Ser380.

Belongs to the RuBisCO large chain family. Type I subfamily. In terms of assembly, heterohexadecamer of 8 large chains and 8 small chains. Requires Mg(2+) as cofactor.

The catalysed reaction is 2 (2R)-3-phosphoglycerate + 2 H(+) = D-ribulose 1,5-bisphosphate + CO2 + H2O. It carries out the reaction D-ribulose 1,5-bisphosphate + O2 = 2-phosphoglycolate + (2R)-3-phosphoglycerate + 2 H(+). Its function is as follows. RuBisCO catalyzes two reactions: the carboxylation of D-ribulose 1,5-bisphosphate, the primary event in carbon dioxide fixation, as well as the oxidative fragmentation of the pentose substrate. Both reactions occur simultaneously and in competition at the same active site. This is Ribulose bisphosphate carboxylase large chain 3 from Bradyrhizobium sp. (strain BTAi1 / ATCC BAA-1182).